Here is a 344-residue protein sequence, read N- to C-terminus: Arginine N-succinyltransferase (344 aa).

Leu-125 is a binding site for succinyl-CoA. The Proton donor role is filled by His-229.

This sequence belongs to the arginine N-succinyltransferase family.

It carries out the reaction succinyl-CoA + L-arginine = N(2)-succinyl-L-arginine + CoA + H(+). It functions in the pathway amino-acid degradation; L-arginine degradation via AST pathway; L-glutamate and succinate from L-arginine: step 1/5. Catalyzes the transfer of succinyl-CoA to arginine to produce N(2)-succinylarginine. The sequence is that of Arginine N-succinyltransferase from Shigella flexneri serotype 5b (strain 8401).